The following is a 1058-amino-acid chain: Translation initiation factor IF-2 (1058 aa).

A compositionally biased stretch (basic and acidic residues) spans 1-12 (MNDTKTPGDKTL). Positions 1 to 468 (MNDTKTPGDK…MTGHRGMQES (468 aa)) are disordered. Positions 54–81 (APGEAGAPSGTPAAAPAATPAPAAAAPR) are enriched in low complexity. The segment covering 82–95 (PATPAPAAPRPAAP) has biased composition (pro residues). Residues 96 to 108 (ATPAQPAAEAKAP) show a composition bias toward low complexity. Residues 109–119 (APAPTPAPAAP) show a composition bias toward pro residues. Low complexity-rich tracts occupy residues 120-156 (AAPVAEAPKVEAPAPVAAKPEAAPAAPVAEAPKVEVP) and 164-228 (EPVA…QRPG). A compositionally biased stretch (gly residues) spans 244–271 (RSGGPGSDRRGGPGGQNRPGQNRQGGSG). Over residues 292–364 (ARVREVEERR…ARKRFGEETG (73 aa)) the composition is skewed to basic and acidic residues. The segment covering 368-396 (GASAPSTSTARPLTPRPAGTTTTTGAPAA) has biased composition (low complexity). The segment covering 452–461 (FRRRTQRMTG) has biased composition (basic residues). The region spanning 555–725 (PRPPVVTIMG…SLQSEVLDLK (171 aa)) is the tr-type G domain. The interval 564–571 (GHVDHGKT) is G1. Residue 564–571 (GHVDHGKT) participates in GTP binding. Positions 589-593 (GITQH) are G2. The G3 stretch occupies residues 611–614 (DTPG). GTP-binding positions include 611–615 (DTPGH) and 665–668 (NKID). Residues 665–668 (NKID) form a G4 region. The G5 stretch occupies residues 701–703 (SAT).

The protein belongs to the TRAFAC class translation factor GTPase superfamily. Classic translation factor GTPase family. IF-2 subfamily.

It is found in the cytoplasm. Functionally, one of the essential components for the initiation of protein synthesis. Protects formylmethionyl-tRNA from spontaneous hydrolysis and promotes its binding to the 30S ribosomal subunits. Also involved in the hydrolysis of GTP during the formation of the 70S ribosomal complex. The protein is Translation initiation factor IF-2 of Azorhizobium caulinodans (strain ATCC 43989 / DSM 5975 / JCM 20966 / LMG 6465 / NBRC 14845 / NCIMB 13405 / ORS 571).